The following is a 135-amino-acid chain: Large ribosomal subunit protein uL16c (135 aa).

It belongs to the universal ribosomal protein uL16 family. Part of the 50S ribosomal subunit.

It is found in the plastid. The protein localises to the chloroplast. This Panax ginseng (Korean ginseng) protein is Large ribosomal subunit protein uL16c.